Reading from the N-terminus, the 865-residue chain is Ribosome biogenesis protein BOP1 homolog (865 aa).

Disordered stretches follow at residues 1-195 (MVAN…LKLG) and 207-240 (KTRG…EEDI). Composition is skewed to acidic residues over residues 30–44 (LDES…ESDY), 57–79 (NEGE…DDVL), and 87–159 (DGEE…EEEA). The span at 160 to 180 (KENGKEKPAKAKAERKQREEQ) shows a compositional bias: basic and acidic residues. WD repeat units follow at residues 526–565 (GHTS…CIRT), 567–607 (PTGD…YMLV), 651–693 (THFR…SQVP), 696–734 (KSKG…MMKK), 737–776 (PGCK…KPYQ), 780–819 (IHNA…DLLQ), and 835–865 (VNDF…RLYT).

This sequence belongs to the WD repeat BOP1/ERB1 family.

It localises to the nucleus. The protein resides in the nucleolus. The protein localises to the nucleoplasm. Its function is as follows. Required for maturation of ribosomal RNAs and formation of the large ribosomal subunit. The sequence is that of Ribosome biogenesis protein BOP1 homolog from Anopheles gambiae (African malaria mosquito).